Consider the following 261-residue polypeptide: Carboxy-terminal domain RNA polymerase II polypeptide A small phosphatase 1 (261 aa).

Met1 bears the N-acetylmethionine mark. Polar residues predominate over residues 1 to 10 (MDSSAVITQI). The disordered stretch occupies residues 1 to 33 (MDSSAVITQISKEEARGPLRGKGDQKSAASQKP). Positions 11–25 (SKEEARGPLRGKGDQ) are enriched in basic and acidic residues. Residues 86–244 (QDSDKICVVI…HDLLPFFEQL (159 aa)) enclose the FCP1 homology domain. Residue Asp96 is the 4-aspartylphosphate intermediate of the active site. Residues Asp96, Asp98, and Asn207 each contribute to the Mg(2+) site. Residue Asp98 is the Proton donor of the active site.

As to quaternary structure, monomer. Interacts with GTF2F1. Interacts with REST. Requires Mg(2+) as cofactor. In terms of tissue distribution, expression is restricted to non-neuronal tissues. Highest expression in skeletal muscle, spleen, lung and placenta.

The protein resides in the nucleus. It carries out the reaction O-phospho-L-seryl-[protein] + H2O = L-seryl-[protein] + phosphate. The enzyme catalyses O-phospho-L-threonyl-[protein] + H2O = L-threonyl-[protein] + phosphate. Its activity is regulated as follows. Stimulated by GTF2F1. Inhibited by beryllofluoride anions. Preferentially catalyzes the dephosphorylation of 'Ser-5' within the tandem 7 residue repeats in the C-terminal domain (CTD) of the largest RNA polymerase II subunit POLR2A. Negatively regulates RNA polymerase II transcription, possibly by controlling the transition from initiation/capping to processive transcript elongation. Recruited by REST to neuronal genes that contain RE-1 elements, leading to neuronal gene silencing in non-neuronal cells. This chain is Carboxy-terminal domain RNA polymerase II polypeptide A small phosphatase 1 (CTDSP1), found in Homo sapiens (Human).